We begin with the raw amino-acid sequence, 364 residues long: Protein FAM81A (364 aa).

3 coiled-coil regions span residues 75 to 107 (FLEE…RDNI), 158 to 189 (NKEQ…VDLS), and 261 to 287 (ANER…QKRN). Residues 281-300 (EESQKRNAEGQRKPDEEKVH) form a disordered region.

The protein belongs to the FAM81 family. Interacts with DLG4/PSD-95, GRIN2B/GLUN2B and SYNGAP1; the interactions facilitate condensate formation. Expressed in most regions of the brain (at protein level).

The protein resides in the postsynaptic density. It is found in the cytoplasm. In terms of biological role, facilitates the interaction and assembly of proteins within the postsynaptic density by promoting the condensation of postsynaptic proteins via liquid-liquid phase separation. Required for neuronal activity. Accumulation at the postsynaptic density results in enlargement of dendritic spines. This is Protein FAM81A (Fam81a) from Mus musculus (Mouse).